Consider the following 218-residue polypeptide: Phosphoglycolate phosphatase (218 aa).

D7 serves as the catalytic Nucleophile. Mg(2+) contacts are provided by D7, D9, and D167.

This sequence belongs to the HAD-like hydrolase superfamily. CbbY/CbbZ/Gph/YieH family. The cofactor is Mg(2+).

It catalyses the reaction 2-phosphoglycolate + H2O = glycolate + phosphate. It functions in the pathway organic acid metabolism; glycolate biosynthesis; glycolate from 2-phosphoglycolate: step 1/1. In terms of biological role, specifically catalyzes the dephosphorylation of 2-phosphoglycolate. Is involved in the dissimilation of the intracellular 2-phosphoglycolate formed during the DNA repair of 3'-phosphoglycolate ends, a major class of DNA lesions induced by oxidative stress. The polypeptide is Phosphoglycolate phosphatase (Cereibacter sphaeroides (strain ATCC 17029 / ATH 2.4.9) (Rhodobacter sphaeroides)).